The chain runs to 110 residues: Protein RnfH (110 aa).

Positions 86–110 (RQRRVEKTRKAGSIEGRRWQNKDSR) are disordered. Positions 100–110 (EGRRWQNKDSR) are enriched in basic and acidic residues.

It belongs to the UPF0125 (RnfH) family.

This Paraburkholderia xenovorans (strain LB400) protein is Protein RnfH.